The following is a 77-amino-acid chain: MKHLIVAVVLLSALAICTSAEEEQVNVPFRPEERIGECAGWNDNCDKRSCCDQCHQCRCKFGSNCRCTGTKPSCGKR.

The first 20 residues, 1–20 (MKHLIVAVVLLSALAICTSA), serve as a signal peptide directing secretion. Positions 21–34 (EEEQVNVPFRPEER) are excised as a propeptide. 5 disulfides stabilise this stretch: Cys38-Cys51, Cys45-Cys57, Cys50-Cys67, Cys54-Cys74, and Cys59-Cys65. Ser73 carries the O-palmitoyl serine lipid modification. Cys74 is modified (cysteine amide).

This sequence belongs to the neurotoxin 02 (plectoxin) family. 01 (Tx3) subfamily. As to expression, expressed by the venom gland.

The protein resides in the secreted. Excitatory toxin that acts on both calcium and sodium (Nav) channels. It preferentially blocks a subset of calcium channels that is apparently not required for neurotransmitter release, it decreases threshold for sodium channel activation and it slows sodium channel inactivation. As it enhances synaptic transmission by prolonging presynaptic release of neurotransmitter, its effects on sodium and calcium channels may act synergistically to sustain the terminal excitability. This Plectreurys tristis (Spider) protein is Delta/omega-plectoxin-Pt1a.